Consider the following 663-residue polypeptide: Terreic acid cluster-specific transcription factor atF (663 aa).

Residues 1–20 (MFATFNSSMDNRSSANSPVA) are compositionally biased toward polar residues. 2 disordered regions span residues 1 to 28 (MFATFNSSMDNRSSANSPVAPSSRPKRT) and 55 to 126 (TRGV…SPSQ). The zn(2)-C6 fungal-type DNA-binding region spans 34 to 60 (CDWCRLNRVKCDDGQPCKNCRTRGVRC). The span at 55–64 (TRGVRCRKGS) shows a compositional bias: basic residues. Low complexity-rich tracts occupy residues 73–88 (SSSAAASERARSQGAQ) and 105–125 (ATTSRRNSRTPSSSPSSPSPS).

It localises to the nucleus. Transcription factor that regulates the expression of the gene cluster that mediates the biosynthesis of terreic acid, a quinone epoxide inhibitor of Bruton's tyrosine kinase. This is Terreic acid cluster-specific transcription factor atF from Aspergillus terreus (strain NIH 2624 / FGSC A1156).